The sequence spans 206 residues: Small ribosomal subunit protein uS4 (206 aa).

Residues 96-161 (RRLDNVVYRM…QGRIQAALAL (66 aa)) form the S4 RNA-binding domain.

Belongs to the universal ribosomal protein uS4 family. As to quaternary structure, part of the 30S ribosomal subunit. Contacts protein S5. The interaction surface between S4 and S5 is involved in control of translational fidelity.

In terms of biological role, one of the primary rRNA binding proteins, it binds directly to 16S rRNA where it nucleates assembly of the body of the 30S subunit. Functionally, with S5 and S12 plays an important role in translational accuracy. This is Small ribosomal subunit protein uS4 from Legionella pneumophila (strain Paris).